The primary structure comprises 424 residues: Arginine biosynthesis bifunctional protein ArgJ (424 aa).

Positions 172, 198, 209, 296, 419, and 424 each coordinate substrate. Threonine 209 acts as the Nucleophile in catalysis.

This sequence belongs to the ArgJ family. In terms of assembly, heterotetramer of two alpha and two beta chains.

The protein localises to the cytoplasm. The catalysed reaction is N(2)-acetyl-L-ornithine + L-glutamate = N-acetyl-L-glutamate + L-ornithine. It catalyses the reaction L-glutamate + acetyl-CoA = N-acetyl-L-glutamate + CoA + H(+). It participates in amino-acid biosynthesis; L-arginine biosynthesis; L-ornithine and N-acetyl-L-glutamate from L-glutamate and N(2)-acetyl-L-ornithine (cyclic): step 1/1. It functions in the pathway amino-acid biosynthesis; L-arginine biosynthesis; N(2)-acetyl-L-ornithine from L-glutamate: step 1/4. Catalyzes two activities which are involved in the cyclic version of arginine biosynthesis: the synthesis of N-acetylglutamate from glutamate and acetyl-CoA as the acetyl donor, and of ornithine by transacetylation between N(2)-acetylornithine and glutamate. This chain is Arginine biosynthesis bifunctional protein ArgJ, found in Gluconobacter oxydans (strain 621H) (Gluconobacter suboxydans).